We begin with the raw amino-acid sequence, 146 residues long: MKLHELRPAAGSKSAPKRVGRGTGSGLGRNAGKGEKGQNARSGGGVRPGFEGGQMPLYRRLPKRGFTNPFTKHFVTINVDRLNIFDNGTEVTPELLLERRVVSKLMDGVKILGNGNIEKSLTIAGCKLSKQAAEKIVAAGGKVEVK.

The disordered stretch occupies residues M1 to Q54. Composition is skewed to gly residues over residues R21 to A31 and S42 to G52.

The protein belongs to the universal ribosomal protein uL15 family. Part of the 50S ribosomal subunit.

In terms of biological role, binds to the 23S rRNA. This is Large ribosomal subunit protein uL15 from Clostridium perfringens (strain ATCC 13124 / DSM 756 / JCM 1290 / NCIMB 6125 / NCTC 8237 / Type A).